The chain runs to 379 residues: MANLRKTHPLLKIANDALVDLPTPSNISAWWNFGSLLGLCLISQILTGLFLAMHYTSDISTAFSSVAHICRDVNYGWLIRNLHANGASFFFICLYLHIARGLYYGSYLYMETWNIGVVLFLLVMMTAFVGYVLPWGQMSFWGATVITNLLSAVPYVGNSLVQWIWGGFSVDNATLTRFFAFHFLFPFVVAGATMLHLLFLHETGSNNPVGLNSDADKIPFHPYFSYKDLLGFIIMLTALTMLALFYPNLLGDPDNFTPANPMVTPPHIKPEWYFLFAYAILRSIPNKLGGVLALLSSILVLMVVPILHTSKQRGLTFRPASQLLFWILVADMLVLTWIGGMPVEHPYIIIGQVASVLYFSLFLVLNPLVGWLENKVMNW.

4 consecutive transmembrane segments (helical) span residues 33 to 53, 77 to 98, 113 to 133, and 178 to 198; these read FGSL…FLAM, WLIR…YLHI, WNIG…GYVL, and FFAF…LHLL. 2 residues coordinate heme b: histidine 83 and histidine 97. Heme b is bound by residues histidine 182 and histidine 196. Residue histidine 201 coordinates a ubiquinone. Helical transmembrane passes span 226-246, 288-308, 320-340, and 347-367; these read YKDL…ALFY, LGGV…PILH, ASQL…WIGG, and YIII…VLNP.

The protein belongs to the cytochrome b family. As to quaternary structure, the cytochrome bc1 complex contains 3 respiratory subunits (MT-CYB, CYC1 and UQCRFS1), 2 core proteins (UQCRC1 and UQCRC2) and probably 6 low-molecular weight proteins. Heme b is required as a cofactor.

It is found in the mitochondrion inner membrane. Its function is as follows. Component of the ubiquinol-cytochrome c reductase complex (complex III or cytochrome b-c1 complex) that is part of the mitochondrial respiratory chain. The b-c1 complex mediates electron transfer from ubiquinol to cytochrome c. Contributes to the generation of a proton gradient across the mitochondrial membrane that is then used for ATP synthesis. This Anguilla anguilla (European freshwater eel) protein is Cytochrome b (mt-cyb).